The sequence spans 354 residues: Uroporphyrinogen decarboxylase (354 aa).

Substrate is bound by residues 30–34 (RQAGR), Asp-79, Tyr-154, Ser-209, and His-333.

The protein belongs to the uroporphyrinogen decarboxylase family. In terms of assembly, homodimer.

The protein resides in the cytoplasm. The catalysed reaction is uroporphyrinogen III + 4 H(+) = coproporphyrinogen III + 4 CO2. Its pathway is porphyrin-containing compound metabolism; protoporphyrin-IX biosynthesis; coproporphyrinogen-III from 5-aminolevulinate: step 4/4. In terms of biological role, catalyzes the decarboxylation of four acetate groups of uroporphyrinogen-III to yield coproporphyrinogen-III. In Mycolicibacterium vanbaalenii (strain DSM 7251 / JCM 13017 / BCRC 16820 / KCTC 9966 / NRRL B-24157 / PYR-1) (Mycobacterium vanbaalenii), this protein is Uroporphyrinogen decarboxylase.